The primary structure comprises 492 residues: MATIHPPAYLLDQAKRRFTPSFNNFPGMSLVEHMLLNTKFPEKKLAEPPPGSGLKPVVGDAGLPILGHMIEMLRGGPDYLMFLYKTKGPVVFGDSAVLPGVAALGPDAAQVIYSNRNKDYSQQGWVPVIGPFFHRGLMLLDFEEHMFHRRIMQEAFVRSRLAGYLEQMDRVVSRVVADDWVVNDARFLVYPAMKALTLDIASMVFMGHEPGTDHELVTKVNKAFTITTRAGNAVIRTSVPPFTWWRGLRARELLENYFTARVKERREASGNDLLTVLCQTEDDDGNRFSDADIVNHMIFLMMAAHDTSTSTATTMAYQLAAHPEWQQRCRDESDRHGDGPLDIESLEQLESLDLVMNESIRLVTPVQWAMRQTVRDTELLGYYLPKGTNVIAYPGMNHRLPEIWTDPLTFDPERFTEPRNEHKRHRYAFTPFGGGVHKCIGMVFDQLEIKTILHRLLRRYRLELSRPDYQPRWDYSAMPIPMDGMPIVLRPR.

C439 lines the heme pocket.

It belongs to the cytochrome P450 family. It depends on heme as a cofactor.

In Mycobacterium tuberculosis (strain CDC 1551 / Oshkosh), this protein is Putative cytochrome P450 136 (cyp136).